The following is a 216-amino-acid chain: Somatotropin (216 aa).

The first 26 residues, 1 to 26, serve as a signal peptide directing secretion; that stretch reads MATDSRTSWLLTVSLLCLLWPQEASA. His-45 is a Zn(2+) binding site. A disulfide bridge connects residues Cys-78 and Cys-189. Ser-131 carries the phosphoserine modification. Glu-198 contributes to the Zn(2+) binding site. A disulfide bridge links Cys-206 with Cys-214.

It belongs to the somatotropin/prolactin family.

The protein localises to the secreted. Plays an important role in growth control. Its major role in stimulating body growth is to stimulate the liver and other tissues to secrete IGF1. It stimulates both the differentiation and proliferation of myoblasts. It also stimulates amino acid uptake and protein synthesis in muscle and other tissues. This Mus musculus (Mouse) protein is Somatotropin (Gh1).